The chain runs to 202 residues: UPF0126 membrane protein YvgT (202 aa).

Helical transmembrane passes span Trp-3–Met-23, Glu-26–Ile-46, Ala-63–Leu-83, Gly-90–Val-110, Gly-113–Ile-133, and Ile-160–Val-180.

Belongs to the UPF0126 family.

Its subcellular location is the cell membrane. In Bacillus subtilis (strain 168), this protein is UPF0126 membrane protein YvgT (yvgT).